Consider the following 132-residue polypeptide: Large ribosomal subunit protein uL22 (132 aa).

This sequence belongs to the universal ribosomal protein uL22 family. As to quaternary structure, part of the 50S ribosomal subunit.

In terms of biological role, this protein binds specifically to 23S rRNA; its binding is stimulated by other ribosomal proteins, e.g. L4, L17, and L20. It is important during the early stages of 50S assembly. It makes multiple contacts with different domains of the 23S rRNA in the assembled 50S subunit and ribosome. Its function is as follows. The globular domain of the protein is located near the polypeptide exit tunnel on the outside of the subunit, while an extended beta-hairpin is found that lines the wall of the exit tunnel in the center of the 70S ribosome. This is Large ribosomal subunit protein uL22 from Rhodospirillum centenum (strain ATCC 51521 / SW).